A 104-amino-acid chain; its full sequence is MAAKIRKGDKVIVLTGRDKGRTGEVFEVRPDAGTALVRGINLVKRHQKQTQNQEGGIITKEAPIHLSNVAYVGKDGKPTRIGFKVQADGKKVRVAKSSGVEIDG.

The protein belongs to the universal ribosomal protein uL24 family. In terms of assembly, part of the 50S ribosomal subunit.

Its function is as follows. One of two assembly initiator proteins, it binds directly to the 5'-end of the 23S rRNA, where it nucleates assembly of the 50S subunit. Functionally, one of the proteins that surrounds the polypeptide exit tunnel on the outside of the subunit. This chain is Large ribosomal subunit protein uL24, found in Bradyrhizobium sp. (strain BTAi1 / ATCC BAA-1182).